Reading from the N-terminus, the 304-residue chain is Probable 5-dehydro-4-deoxyglucarate dehydratase (304 aa).

It belongs to the DapA family.

The enzyme catalyses 5-dehydro-4-deoxy-D-glucarate + H(+) = 2,5-dioxopentanoate + CO2 + H2O. It functions in the pathway carbohydrate acid metabolism; D-glucarate degradation; 2,5-dioxopentanoate from D-glucarate: step 2/2. The sequence is that of Probable 5-dehydro-4-deoxyglucarate dehydratase from Pseudarthrobacter chlorophenolicus (strain ATCC 700700 / DSM 12829 / CIP 107037 / JCM 12360 / KCTC 9906 / NCIMB 13794 / A6) (Arthrobacter chlorophenolicus).